A 78-amino-acid polypeptide reads, in one-letter code: Large ribosomal subunit protein bL28 (78 aa).

The protein belongs to the bacterial ribosomal protein bL28 family.

This Xylella fastidiosa (strain 9a5c) protein is Large ribosomal subunit protein bL28 (rpmB).